Reading from the N-terminus, the 195-residue chain is Imidazoleglycerol-phosphate dehydratase (195 aa).

The protein belongs to the imidazoleglycerol-phosphate dehydratase family.

The protein localises to the cytoplasm. The catalysed reaction is D-erythro-1-(imidazol-4-yl)glycerol 3-phosphate = 3-(imidazol-4-yl)-2-oxopropyl phosphate + H2O. It functions in the pathway amino-acid biosynthesis; L-histidine biosynthesis; L-histidine from 5-phospho-alpha-D-ribose 1-diphosphate: step 6/9. The sequence is that of Imidazoleglycerol-phosphate dehydratase from Ruegeria sp. (strain TM1040) (Silicibacter sp.).